The following is a 760-amino-acid chain: Xaa-Pro dipeptidyl-peptidase (760 aa).

Residues serine 349, aspartate 469, and histidine 499 each act as charge relay system in the active site.

This sequence belongs to the peptidase S15 family. In terms of assembly, homodimer.

It is found in the cytoplasm. The enzyme catalyses Hydrolyzes Xaa-Pro-|- bonds to release unblocked, N-terminal dipeptides from substrates including Ala-Pro-|-p-nitroanilide and (sequentially) Tyr-Pro-|-Phe-Pro-|-Gly-Pro-|-Ile.. In terms of biological role, removes N-terminal dipeptides sequentially from polypeptides having unsubstituted N-termini provided that the penultimate residue is proline. The sequence is that of Xaa-Pro dipeptidyl-peptidase from Streptococcus pyogenes serotype M2 (strain MGAS10270).